A 181-amino-acid chain; its full sequence is MSSAIASRRYALALLEVAIEANFLDTVTEDLLKIQEVLSGSRELLLALRSPLINVDLKSRILEEIFGKEVGEKTMIFIKLLAHKKRANLLPTVITEFSSLLDERNGVINADVKSAVKLSDEQAKELVNGLSIRTGKKIRAKMSLDEKLIGGVTVKIGDTILDGSIQHQLQLLKSSLIAEPA.

The protein belongs to the ATPase delta chain family. As to quaternary structure, F-type ATPases have 2 components, F(1) - the catalytic core - and F(0) - the membrane proton channel. F(1) has five subunits: alpha(3), beta(3), gamma(1), delta(1), epsilon(1). F(0) has three main subunits: a(1), b(2) and c(10-14). The alpha and beta chains form an alternating ring which encloses part of the gamma chain. F(1) is attached to F(0) by a central stalk formed by the gamma and epsilon chains, while a peripheral stalk is formed by the delta and b chains.

The protein resides in the cell inner membrane. F(1)F(0) ATP synthase produces ATP from ADP in the presence of a proton or sodium gradient. F-type ATPases consist of two structural domains, F(1) containing the extramembraneous catalytic core and F(0) containing the membrane proton channel, linked together by a central stalk and a peripheral stalk. During catalysis, ATP synthesis in the catalytic domain of F(1) is coupled via a rotary mechanism of the central stalk subunits to proton translocation. Functionally, this protein is part of the stalk that links CF(0) to CF(1). It either transmits conformational changes from CF(0) to CF(1) or is implicated in proton conduction. The sequence is that of ATP synthase subunit delta from Chlorobaculum parvum (strain DSM 263 / NCIMB 8327) (Chlorobium vibrioforme subsp. thiosulfatophilum).